Reading from the N-terminus, the 122-residue chain is Large ribosomal subunit protein bL12 (122 aa).

Belongs to the bacterial ribosomal protein bL12 family. Homodimer. Part of the ribosomal stalk of the 50S ribosomal subunit. Forms a multimeric L10(L12)X complex, where L10 forms an elongated spine to which 2 to 4 L12 dimers bind in a sequential fashion. Binds GTP-bound translation factors.

Its function is as follows. Forms part of the ribosomal stalk which helps the ribosome interact with GTP-bound translation factors. Is thus essential for accurate translation. The chain is Large ribosomal subunit protein bL12 from Clostridium botulinum (strain 657 / Type Ba4).